Consider the following 338-residue polypeptide: UDP-3-O-acylglucosamine N-acyltransferase (338 aa).

His-243 (proton acceptor) is an active-site residue.

Belongs to the transferase hexapeptide repeat family. LpxD subfamily. As to quaternary structure, homotrimer.

The enzyme catalyses a UDP-3-O-[(3R)-3-hydroxyacyl]-alpha-D-glucosamine + a (3R)-hydroxyacyl-[ACP] = a UDP-2-N,3-O-bis[(3R)-3-hydroxyacyl]-alpha-D-glucosamine + holo-[ACP] + H(+). It functions in the pathway bacterial outer membrane biogenesis; LPS lipid A biosynthesis. Catalyzes the N-acylation of UDP-3-O-acylglucosamine using 3-hydroxyacyl-ACP as the acyl donor. Is involved in the biosynthesis of lipid A, a phosphorylated glycolipid that anchors the lipopolysaccharide to the outer membrane of the cell. This chain is UDP-3-O-acylglucosamine N-acyltransferase, found in Amoebophilus asiaticus (strain 5a2).